The primary structure comprises 374 residues: MAAPALGPARGCGAELTLVLLLSLFLLLGWAAGGEEAGPEAGAPSLVGSCGCGNPQRPGAQGSSAAAHRYSREANAPGSVPGGRPSPPTKMVPIPAGVFTMGTDDPQIKQDGEAPARRVAIDAFYMDAYEVSNAEFEKFVNSTGYLTEAEKFGDSFVFEGMLSEQVKSDIQQAVAAAPWWLPVKGANWRHPEGPDSTVLHRPDHPVLHVSWNDAVAYCTWAGKRLPTEAEWEYSCRGGLQNRLFPWGNKLQPKGQHYANIWQGEFPVTNTGEDGFRGTAPVDAFPPNGYGLYNIVGNAWEWTSDWWTVHHSAEETINPKGPPSGKDRVKKGGSYMCHKSYCYRYRCAARSQNTPDSSASNLGFRCAADHLPTTG.

A signal peptide spans 1-33 (MAAPALGPARGCGAELTLVLLLSLFLLLGWAAG). Cys50 and Cys52 are disulfide-bonded. The tract at residues 57–102 (RPGAQGSSAAAHRYSREANAPGSVPGGRPSPPTKMVPIPAGVFTMG) is disordered. Glu130 is a binding site for Ca(2+). Asn141 is a glycosylation site (N-linked (GlcNAc...) asparagine). Intrachain disulfides connect Cys218-Cys365 and Cys235-Cys346. Asn259, Ile260, Asp273, Phe275, Asn293, Gly296, Ala298, and Glu300 together coordinate Ca(2+). The Cu(2+) site is built by Cys336 and Cys341. Residues 341–360 (CYRYRCAARSQNTPDSSASN) form an interaction with sulfatases region.

Belongs to the sulfatase-modifying factor family. As to quaternary structure, monomer, homodimer and heterodimer with SUMF2. The cofactor is Cu(2+). N-glycosylated. Contains high-mannose-type oligosaccharides.

Its subcellular location is the endoplasmic reticulum lumen. It catalyses the reaction L-cysteinyl-[sulfatase] + 2 a thiol + O2 = an organic disulfide + 3-oxo-L-alanyl-[sulfatase] + hydrogen sulfide + H2O + H(+). The protein operates within protein modification; sulfatase oxidation. Functionally, oxidase that catalyzes the conversion of cysteine to 3-oxoalanine on target proteins, using molecular oxygen and an unidentified reducing agent. 3-oxoalanine modification, which is also named formylglycine (fGly), occurs in the maturation of arylsulfatases and some alkaline phosphatases that use the hydrated form of 3-oxoalanine as a catalytic nucleophile. Known substrates include GALNS, ARSA, STS and ARSE. In Bos taurus (Bovine), this protein is Formylglycine-generating enzyme.